Reading from the N-terminus, the 217-residue chain is Vacuolar protein-sorting-associated protein 37 homolog 1 (217 aa).

The interval 1–49 (MFNFWGSKDQQQGQSRPQEASSQSPWYSPSLVSSPSSSRPQSSGQISAQ) is disordered. The segment covering 8–20 (KDQQQGQSRPQEA) has biased composition (polar residues). Positions 21–47 (SSQSPWYSPSLVSSPSSSRPQSSGQIS) are enriched in low complexity. The VPS37 C-terminal domain occupies 137-217 (QEKLNELERQ…IHLAAKTSNI (81 aa)).

The protein belongs to the VPS37 family. In terms of assembly, component of the endosomal sorting required for transport complex I (ESCRT-I), composed of ELC, VPS28 and VPS37. Interacts with ELC.

It localises to the endosome. In terms of biological role, component of the ESCRT-I complex (endosomal sorting complex required for transport I), a regulator of vesicular trafficking process. Required for the sorting of endocytic ubiquitinated cargos into multivesicular bodies (MVBs). The chain is Vacuolar protein-sorting-associated protein 37 homolog 1 (VPS37-1) from Arabidopsis thaliana (Mouse-ear cress).